A 411-amino-acid chain; its full sequence is Protrudin (411 aa).

The interval 1-27 (MQTSEREGSGPELSPSVMPEAPLESPP) is disordered. Residues 1-66 (MQTSEREGSG…AGDGVRYLLR (66 aa)) are Cytoplasmic-facing. A sufficient for homooligomerization region spans residues 1 to 92 (MQTSEREGSG…LFLTLNEGAW (92 aa)). Positions 1–205 (MQTSEREGSG…LYLLPLCWVL (205 aa)) are sufficient for localization to endoplasmic reticulum tubular network and for interactions with REEP1, REEP5, ATL1, ATL2, ATL3 and SPAST. The segment at 51-64 (LEPLKDAGDGVRYL) is necessary for interaction with RAB11A and function in neurite outgrowth. Residues 67–87 (WQMPLCSLLTCLGLNVLFLTL) form a helical membrane-spanning segment. Asn-88 is a topological domain (lumenal). The helical transmembrane segment at 89–109 (EGAWYSVGALMISVPALLGYL) threads the bilayer. Topologically, residues 110 to 187 (QEVCRARLPD…NPVVSSQFYG (78 aa)) are cytoplasmic. Positions 188–208 (ALLGTVCMLYLLPLCWVLTLL) form an intramembrane region, helical. Topologically, residues 209 to 411 (NSTLFLGNVE…CASCNQTLSK (203 aa)) are cytoplasmic. Residues 234–286 (MNPKQEEHAFESPPPPDVGGKDGLMDSTPALTPTEDLTPGSVEEAEEAEPDEE) form a disordered region. The tract at residues 271–361 (TPGSVEEAEE…GCSATFSVLK (91 aa)) is necessary for interaction with KIF5A. The segment covering 276 to 286 (EEAEEAEPDEE) has biased composition (acidic residues). The necessary for interaction with VAPA and function in cell projections formation stretch occupies residues 286-292 (EFKDAIE). An FYVE-type zinc finger spans residues 344-410 (TNNFGNCTGC…VCASCNQTLS (67 aa)). The Zn(2+) site is built by Cys-350, Cys-353, Cys-366, Cys-369, Cys-374, Cys-377, Cys-402, and Cys-405.

Can form homooligomers (monomers, dimers and tetramers). Interacts with RAB11A (GDP-bound form); regulates RAB11A. Interacts with FKBP8; may negatively regulate ZFYVE27 phosphorylation. Interacts with VAPA (via MSP domain); may regulate ZFYVE27 retention in the endoplasmic reticulum and its function in cell projections formation. Interacts with VAPB (via MSP domain). Interacts with REEP1, REEP5 and ATL1. Interacts with ATL2, ATL3 and SPAST. Interacts with KIF5A and RTN3. Interacts with RAB11B (GDP-bound form), SURF4, KIF5B and KIF5C. In terms of processing, phosphorylated. Phosphorylation is induced by NGF through the MAPK/ERK pathway and modulates interaction with RAB11A.

It is found in the recycling endosome membrane. Its subcellular location is the endoplasmic reticulum membrane. The protein localises to the cell projection. The protein resides in the growth cone membrane. Its function is as follows. Key regulator of RAB11-dependent vesicular trafficking during neurite extension through polarized membrane transport. Promotes axonal elongation and contributes to the establishment of neuronal cell polarity. Involved in nerve growth factor-induced neurite formation in VAPA-dependent manner. Contributes to both the formation and stabilization of the tubular ER network. Involved in ER morphogenesis by regulating the sheet-to-tubule balance and possibly the density of tubule interconnections. Acts as an adapter protein and facilitates the interaction of KIF5A with VAPA, VAPB, SURF4, RAB11A, RAB11B and RTN3 and the ZFYVE27-KIF5A complex contributes to the transport of these proteins in neurons. Can induce formation of neurite-like membrane protrusions in non-neuronal cells in a KIF5A/B-dependent manner. This is Protrudin (ZFYVE27) from Homo sapiens (Human).